Here is a 443-residue protein sequence, read N- to C-terminus: ATP synthase subunit b-delta (443 aa).

Residues 1 to 168 (MSTFIGQLIG…PSDAALDDAV (168 aa)) form an ATP synthase subunit b region. A helical transmembrane segment spans residues 4-24 (FIGQLIGFAVIVFLLVRFVVP). Residues 169–443 (GSRMRSTSRE…LASAETQLPD (275 aa)) are ATP synthase subunit delta.

The protein in the N-terminal section; belongs to the ATPase B chain family. It in the C-terminal section; belongs to the ATPase delta chain family. In terms of assembly, F-type ATPases have 2 components, F(1) - the catalytic core - and F(0) - the membrane proton channel. F(1) has five subunits: alpha(3), beta(3), gamma(1), delta(1), epsilon(1). F(0) has three main subunits: a(1), b(2) and c(10-14). The alpha and beta chains form an alternating ring which encloses part of the gamma chain. F(1) is attached to F(0) by a central stalk formed by the gamma and epsilon chains, while a peripheral stalk is formed by the delta and b chains.

Its subcellular location is the cell membrane. In terms of biological role, f(1)F(0) ATP synthase produces ATP from ADP in the presence of a proton or sodium gradient. F-type ATPases consist of two structural domains, F(1) containing the extramembraneous catalytic core and F(0) containing the membrane proton channel, linked together by a central stalk and a peripheral stalk. During catalysis, ATP synthesis in the catalytic domain of F(1) is coupled via a rotary mechanism of the central stalk subunits to proton translocation. Its function is as follows. This fusion protein includes a component of the F(0) channel (subunit b) and of the F(1) subunit (subunit delta). Two copies of subunit b and one of delta together form the peripheral 'stator' stalk which links F(1) to F(0). The chain is ATP synthase subunit b-delta (atpFH) from Mycobacterium sp. (strain JLS).